The chain runs to 345 residues: Phosphoribosylformylglycinamidine cyclo-ligase (345 aa).

This sequence belongs to the AIR synthase family.

The protein localises to the cytoplasm. The catalysed reaction is 2-formamido-N(1)-(5-O-phospho-beta-D-ribosyl)acetamidine + ATP = 5-amino-1-(5-phospho-beta-D-ribosyl)imidazole + ADP + phosphate + H(+). It functions in the pathway purine metabolism; IMP biosynthesis via de novo pathway; 5-amino-1-(5-phospho-D-ribosyl)imidazole from N(2)-formyl-N(1)-(5-phospho-D-ribosyl)glycinamide: step 2/2. This Escherichia coli O6:K15:H31 (strain 536 / UPEC) protein is Phosphoribosylformylglycinamidine cyclo-ligase.